The sequence spans 964 residues: Translation initiation factor IF-2 (964 aa).

Residues 49–357 are disordered; it reads QIGSAEPADD…QEFDEMQAPL (309 aa). A compositionally biased stretch (low complexity) spans 62–85; it reads AKPAARKSQTSSKKTSKETTTAKP. Pro residues predominate over residues 86 to 102; sequence APGPKPGPGPKPTPGPR. Positions 103 to 117 are enriched in low complexity; that stretch reads PGSSSGPKPGRSSAA. Pro residues predominate over residues 159-169; the sequence is PHAPAPKPKPG. 2 stretches are compositionally biased toward low complexity: residues 190–212 and 242–251; these read GLPS…APRP and GQGERMPRPG. Composition is skewed to gly residues over residues 252–261 and 284–334; these read GSQGSRGGSG and GRGG…GRGG. Over residues 335–346 the composition is skewed to basic residues; the sequence is GGRRGRKSRKQR. The region spanning 458–629 is the tr-type G domain; the sequence is ARPPVVTVMG…AIVLTADAAL (172 aa). The segment at 467 to 474 is G1; it reads GHVDHGKT. Residue 467–474 participates in GTP binding; the sequence is GHVDHGKT. The segment at 492 to 496 is G2; the sequence is GITQA. The G3 stretch occupies residues 517 to 520; the sequence is DTPG. GTP is bound by residues 517-521 and 571-574; these read DTPGH and NKID. The tract at residues 571–574 is G4; that stretch reads NKID. A G5 region spans residues 607 to 609; sequence SAR.

Belongs to the TRAFAC class translation factor GTPase superfamily. Classic translation factor GTPase family. IF-2 subfamily.

It localises to the cytoplasm. One of the essential components for the initiation of protein synthesis. Protects formylmethionyl-tRNA from spontaneous hydrolysis and promotes its binding to the 30S ribosomal subunits. Also involved in the hydrolysis of GTP during the formation of the 70S ribosomal complex. The sequence is that of Translation initiation factor IF-2 from Cutibacterium acnes (strain DSM 16379 / KPA171202) (Propionibacterium acnes).